The chain runs to 105 residues: MFVVVETGGKQYKLSVGSTVRVEKLQANVGDEVVLDKVLLVGKDDEVLIGQPYVEGAKVIAEVVKQDKYPKVIVFKFKRKKHYRRKYGHRQPYTQLSVKEIVLPQ.

It belongs to the bacterial ribosomal protein bL21 family. In terms of assembly, part of the 50S ribosomal subunit. Contacts protein L20.

This protein binds to 23S rRNA in the presence of protein L20. This is Large ribosomal subunit protein bL21 from Dictyoglomus thermophilum (strain ATCC 35947 / DSM 3960 / H-6-12).